A 503-amino-acid polypeptide reads, in one-letter code: UDP-N-acetylmuramate--L-alanine ligase (503 aa).

120–126 (GTHGKTS) contributes to the ATP binding site.

This sequence belongs to the MurCDEF family.

The protein localises to the cytoplasm. The enzyme catalyses UDP-N-acetyl-alpha-D-muramate + L-alanine + ATP = UDP-N-acetyl-alpha-D-muramoyl-L-alanine + ADP + phosphate + H(+). It functions in the pathway cell wall biogenesis; peptidoglycan biosynthesis. In terms of biological role, cell wall formation. This chain is UDP-N-acetylmuramate--L-alanine ligase, found in Rhodococcus opacus (strain B4).